Reading from the N-terminus, the 150-residue chain is D-aminoacyl-tRNA deacylase (150 aa).

A Gly-cisPro motif, important for rejection of L-amino acids motif is present at residues 138–139 (GP).

It belongs to the DTD family. As to quaternary structure, homodimer.

It is found in the cytoplasm. It carries out the reaction glycyl-tRNA(Ala) + H2O = tRNA(Ala) + glycine + H(+). It catalyses the reaction a D-aminoacyl-tRNA + H2O = a tRNA + a D-alpha-amino acid + H(+). Its function is as follows. An aminoacyl-tRNA editing enzyme that deacylates mischarged D-aminoacyl-tRNAs. Also deacylates mischarged glycyl-tRNA(Ala), protecting cells against glycine mischarging by AlaRS. Acts via tRNA-based rather than protein-based catalysis; rejects L-amino acids rather than detecting D-amino acids in the active site. By recycling D-aminoacyl-tRNA to D-amino acids and free tRNA molecules, this enzyme counteracts the toxicity associated with the formation of D-aminoacyl-tRNA entities in vivo and helps enforce protein L-homochirality. This is D-aminoacyl-tRNA deacylase from Phocaeicola vulgatus (strain ATCC 8482 / DSM 1447 / JCM 5826 / CCUG 4940 / NBRC 14291 / NCTC 11154) (Bacteroides vulgatus).